We begin with the raw amino-acid sequence, 130 residues long: Small ribosomal subunit protein uS11 (130 aa).

Belongs to the universal ribosomal protein uS11 family. Part of the 30S ribosomal subunit. Interacts with proteins S7 and S18. Binds to IF-3.

Located on the platform of the 30S subunit, it bridges several disparate RNA helices of the 16S rRNA. Forms part of the Shine-Dalgarno cleft in the 70S ribosome. This Nitratiruptor sp. (strain SB155-2) protein is Small ribosomal subunit protein uS11.